The chain runs to 309 residues: Probable ABC transporter permease protein YqgH (309 aa).

Transmembrane regions (helical) follow at residues 30–50 (MIVT…TIFL), 88–108 (FIFG…PLGI), 133–153 (LVGI…VPFI), 165–185 (LLAG…SISA), 214–234 (LVPA…ARAF), and 280–300 (NTLW…ILLI). In terms of domain architecture, ABC transmembrane type-1 spans 89 to 300 (IFGSFAVTIL…VMSFLFILLI (212 aa)).

This sequence belongs to the binding-protein-dependent transport system permease family. CysTW subfamily.

It localises to the cell membrane. Part of the binding-protein-dependent transport system YqgGHIJK. Probably responsible for the translocation of the substrate across the membrane. The polypeptide is Probable ABC transporter permease protein YqgH (yqgH) (Bacillus subtilis (strain 168)).